The sequence spans 127 residues: Venom protein family 16 protein 1 (127 aa).

The N-terminal stretch at 1–18 is a signal peptide; that stretch reads MWIWYSLLFFGVCHLAHS.

As to expression, expressed by the venom gland (anterior main gland) (at protein level).

Its subcellular location is the secreted. The polypeptide is Venom protein family 16 protein 1 (Platymeris rhadamanthus (Red spot assassin bug)).